The following is a 681-amino-acid chain: Pentatricopeptide repeat-containing protein At2g22410, mitochondrial (681 aa).

A mitochondrion-targeting transit peptide spans 1–32; sequence MNISKAKLLLLPPPLTPKLNRSLYSHSQRRTR. 13 PPR repeats span residues 117 to 151, 155 to 189, 190 to 220, 221 to 255, 256 to 290, 291 to 321, 322 to 356, 357 to 387, 388 to 422, 423 to 453, 454 to 488, 489 to 519, and 525 to 555; these read NIFSWNVTIRGFSESENPKESFLLYKQMLRHGCCE, DHFTYPVLFKVCADLRLSSLGHMILGHVLKLRLEL, VSHVHNASIHMFASCGDMENARKVFDESPVR, DLVSWNCLINGYKKIGEAEKAIYVYKLMESEGVKP, DDVTMIGLVSSCSMLGDLNRGKEFYEYVKENGLRM, TIPLVNALMDMFSKCGDIHEARRIFDNLEKR, TIVSWTTMISGYARCGLLDVSRKLFDDMEEKDVVL, WNAMIGGSVQAKRGQDALALFQEMQTSNTKP, DEITMIHCLSACSQLGALDVGIWIHRYIEKYSLSL, NVALGTSLVDMYAKCGNISEALSVFHGIQTR, NSLTYTAIIGGLALHGDASTAISYFNEMIDAGIAP, DEITFIGLLSACCHGGMIQTGRDYFSQMKSR, and QLKHYSIMVDLLGRAGLLEEADRLMESMPME. The tract at residues 560 to 635 is type E motif; it reads VWGALLFGCR…IPGCSSIEVN (76 aa). Residues 636-666 are type E(+) motif; sequence GIVCEFIVRDKSRPESEKIYDRLHCLGRHMR.

Belongs to the PPR family. PCMP-E subfamily.

The protein localises to the mitochondrion. The sequence is that of Pentatricopeptide repeat-containing protein At2g22410, mitochondrial (PCMP-E28) from Arabidopsis thaliana (Mouse-ear cress).